The chain runs to 634 residues: ABC transporter B family member 29, chloroplastic (634 aa).

The N-terminal 51 residues, 1-51, are a transit peptide targeting the chloroplast; sequence MSFLLLTPPPCLLIPPPPLSHRRSSSLFLKHPFQPSPRPLSFCKPSALRLR. A run of 6 helical transmembrane segments spans residues 75-95, 119-139, 195-215, 219-239, 307-327, and 330-350; these read TVLL…QIVP, LVLA…QAFL, LLNT…HMIV, ALTL…AYLG, IVQV…VILA, and SLSS…IDPV. Residues 77–362 form the ABC transmembrane type-1 domain; sequence LLGWLCSCVS…LGKAYNELKQ (286 aa). The ABC transporter domain occupies 396 to 633; the sequence is VELCDISFKY…KDSLTSAGLV (238 aa). Position 430–437 (430–437) interacts with ATP; it reads GPSGGGKT.

This sequence belongs to the ABC transporter superfamily. ABCB family. Multidrug resistance exporter (TC 3.A.1.201) subfamily.

The protein localises to the plastid. It is found in the chloroplast membrane. The chain is ABC transporter B family member 29, chloroplastic (ABCB29) from Arabidopsis thaliana (Mouse-ear cress).